The primary structure comprises 101 residues: uncharacterized protein (101 aa).

Helical transmembrane passes span 10 to 32 (FLPNFLLLGAGTALVLCLVFFLY), 45 to 67 (LGIWGSAVGLLMDTISLWNLPLI), and 77 to 99 (IAFTIWMVCAYCMYLLIPLILSH).

It localises to the cell membrane. This is an uncharacterized protein from Bacillus subtilis (strain 168).